A 303-amino-acid polypeptide reads, in one-letter code: Heme A synthase (303 aa).

Residues 1 to 8 (MFGKKNLK) are Cytoplasmic-facing. A helical membrane pass occupies residues 9–29 (WLGVVATLMMTFVQLGGALVT). Residues 30-67 (KTGSADGCGSSWPLCHGALIPEFFPIDTIIELSHRAVS) lie on the Extracellular side of the membrane. Cys-37 and Cys-44 are oxidised to a cystine. Glu-60 is an active-site residue. Heme o is bound at residue His-63. A helical membrane pass occupies residues 68-88 (ALSLLMVLWLVITAWKHIGYI). The Cytoplasmic portion of the chain corresponds to 89-93 (KEIKP). Residues 94 to 114 (LSIISVGFLLLQALIGAAAVI) traverse the membrane as a helical segment. Residues 115–125 (WQQNDYVLALH) lie on the Extracellular side of the membrane. Residue His-125 participates in heme o binding. A helical transmembrane segment spans residues 126–146 (FGISLISFSSVFLITLIIFSI). Over 147–163 (DQKYEADELYIKKPLRR) the chain is Cytoplasmic. The helical transmembrane segment at 164–184 (LTWLMAIIIYCGVYTGALVRH) threads the bilayer. At 185–215 (ADASLAYGGWPLPFHDLVPHSEQDWVQLTHR) the chain is on the extracellular side. Heme b is bound at residue His-214. A helical membrane pass occupies residues 216 to 236 (IMAFIVFTIIMITYIHAVKNY). The Cytoplasmic portion of the chain corresponds to 237 to 244 (PNNRTVHY). A helical transmembrane segment spans residues 245–265 (GYTAAFILVILQVITGALSIM). The Extracellular portion of the chain corresponds to 266–270 (TNVNL). The helical transmembrane segment at 271–291 (IIALFHALFITYLFGMTTYFI) threads the bilayer. His-276 lines the heme b pocket. The Cytoplasmic segment spans residues 292–303 (MLMLRSVRSDKQ).

The protein belongs to the COX15/CtaA family. Type 1 subfamily. Interacts with CtaB. It depends on heme b as a cofactor.

The protein localises to the cell membrane. The enzyme catalyses Fe(II)-heme o + 2 A + H2O = Fe(II)-heme a + 2 AH2. It participates in porphyrin-containing compound metabolism; heme A biosynthesis; heme A from heme O: step 1/1. Its function is as follows. Catalyzes the conversion of heme O to heme A by two successive hydroxylations of the methyl group at C8. The first hydroxylation forms heme I, the second hydroxylation results in an unstable dihydroxymethyl group, which spontaneously dehydrates, resulting in the formyl group of heme A. This Staphylococcus aureus (strain Mu3 / ATCC 700698) protein is Heme A synthase.